The following is a 1112-amino-acid chain: Carbamoyl phosphate synthase large chain (1112 aa).

The tract at residues Met-1–Glu-407 is carboxyphosphate synthetic domain. Residues Arg-134, Arg-174, Gly-180, Gly-181, Glu-213, Ile-215, Glu-220, Gly-246, Val-247, His-248, Gln-290, and Glu-304 each coordinate ATP. The region spanning Lys-138–Ile-333 is the ATP-grasp 1 domain. The Mg(2+) site is built by Gln-290, Glu-304, and Asn-306. Mn(2+) contacts are provided by Gln-290, Glu-304, and Asn-306. The interval Thr-408–Val-559 is oligomerization domain. The carbamoyl phosphate synthetic domain stretch occupies residues Ala-560–Tyr-965. Residues Gly-693–Leu-884 enclose the ATP-grasp 2 domain. ATP is bound by residues Arg-729, Arg-768, Leu-770, Glu-775, Gly-800, Ile-801, His-802, Ser-803, Gln-843, and Glu-855. Mg(2+) contacts are provided by Gln-843, Glu-855, and Asn-857. Residues Gln-843, Glu-855, and Asn-857 each contribute to the Mn(2+) site. Residues Gly-966 to Asn-1112 enclose the MGS-like domain. The interval Gly-966–Asn-1112 is allosteric domain.

The protein belongs to the CarB family. In terms of assembly, composed of two chains; the small (or glutamine) chain promotes the hydrolysis of glutamine to ammonia, which is used by the large (or ammonia) chain to synthesize carbamoyl phosphate. Tetramer of heterodimers (alpha,beta)4. The cofactor is Mg(2+). Mn(2+) is required as a cofactor.

It catalyses the reaction hydrogencarbonate + L-glutamine + 2 ATP + H2O = carbamoyl phosphate + L-glutamate + 2 ADP + phosphate + 2 H(+). The enzyme catalyses hydrogencarbonate + NH4(+) + 2 ATP = carbamoyl phosphate + 2 ADP + phosphate + 2 H(+). It functions in the pathway amino-acid biosynthesis; L-arginine biosynthesis; carbamoyl phosphate from bicarbonate: step 1/1. Its pathway is pyrimidine metabolism; UMP biosynthesis via de novo pathway; (S)-dihydroorotate from bicarbonate: step 1/3. Functionally, large subunit of the glutamine-dependent carbamoyl phosphate synthetase (CPSase). CPSase catalyzes the formation of carbamoyl phosphate from the ammonia moiety of glutamine, carbonate, and phosphate donated by ATP, constituting the first step of 2 biosynthetic pathways, one leading to arginine and/or urea and the other to pyrimidine nucleotides. The large subunit (synthetase) binds the substrates ammonia (free or transferred from glutamine from the small subunit), hydrogencarbonate and ATP and carries out an ATP-coupled ligase reaction, activating hydrogencarbonate by forming carboxy phosphate which reacts with ammonia to form carbamoyl phosphate. The polypeptide is Carbamoyl phosphate synthase large chain (Mycobacterium sp. (strain JLS)).